Reading from the N-terminus, the 67-residue chain is uncharacterized protein (67 aa).

This is an uncharacterized protein from Enterobacteria phage T4 (Bacteriophage T4).